The sequence spans 187 residues: Aspartic protease inhibitor 9 (187 aa).

N-linked (GlcNAc...) asparagine glycosylation occurs at asparagine 19. 2 cysteine pairs are disulfide-bonded: cysteine 48-cysteine 93 and cysteine 142-cysteine 158.

This sequence belongs to the protease inhibitor I3 (leguminous Kunitz-type inhibitor) family. Glycosylated. In terms of tissue distribution, tubers.

The protein resides in the vacuole. Functionally, inhibitor of cathepsin D (aspartic protease) and trypsin (serine protease). May protect the plant by inhibiting proteases of invading organisms. In Solanum tuberosum (Potato), this protein is Aspartic protease inhibitor 9.